The sequence spans 315 residues: Cobalamin biosynthesis protein CobD (315 aa).

The next 5 helical transmembrane spans lie at 54-74, 78-98, 152-172, 203-223, and 295-315; these read GLLFVLTVGMTGAVSWFILFL, IAYWLYVAVFVYLGYTTLAMT, ADGVIAPLFYLFIGGPVLALM, IANFIPARLAWFFLVIASFIL, and LLYMASTIAFIMFASIYLLLF.

This sequence belongs to the CobD/CbiB family.

It is found in the cell membrane. The protein operates within cofactor biosynthesis; adenosylcobalamin biosynthesis. Functionally, converts cobyric acid to cobinamide by the addition of aminopropanol on the F carboxylic group. In Listeria monocytogenes serovar 1/2a (strain ATCC BAA-679 / EGD-e), this protein is Cobalamin biosynthesis protein CobD.